Consider the following 189-residue polypeptide: GTPase HRas (189 aa).

10 to 17 (GAKGVGKS) lines the GTP pocket. The Effector region motif lies at 32 to 40 (YDPTIEDSY). GTP contacts are provided by residues 57–61 (DTAGQ) and 116–119 (NKCD). Residues Cys181 and Cys184 are each lipidated (S-palmitoyl cysteine; by host). Cys186 is modified (cysteine methyl ester; by host). Cys186 carries the S-farnesyl cysteine; by host lipid modification. A propeptide spans 187-189 (VLS) (removed in mature form).

Belongs to the small GTPase superfamily. Ras family.

The protein resides in the host cell membrane. It catalyses the reaction GTP + H2O = GDP + phosphate + H(+). Its activity is regulated as follows. Alternates between an inactive form bound to GDP and an active form bound to GTP. Activated by a guanine nucleotide-exchange factor (GEF) and inactivated by a GTPase-activating protein (GAP). The protein is GTPase HRas (H-RAS) of Moloney murine sarcoma virus (MoMSV).